Reading from the N-terminus, the 149-residue chain is D-aminoacyl-tRNA deacylase (149 aa).

The Gly-cisPro motif, important for rejection of L-amino acids signature appears at 137-138 (GP).

It belongs to the DTD family. As to quaternary structure, homodimer.

The protein resides in the cytoplasm. It catalyses the reaction glycyl-tRNA(Ala) + H2O = tRNA(Ala) + glycine + H(+). The catalysed reaction is a D-aminoacyl-tRNA + H2O = a tRNA + a D-alpha-amino acid + H(+). Functionally, an aminoacyl-tRNA editing enzyme that deacylates mischarged D-aminoacyl-tRNAs. Also deacylates mischarged glycyl-tRNA(Ala), protecting cells against glycine mischarging by AlaRS. Acts via tRNA-based rather than protein-based catalysis; rejects L-amino acids rather than detecting D-amino acids in the active site. By recycling D-aminoacyl-tRNA to D-amino acids and free tRNA molecules, this enzyme counteracts the toxicity associated with the formation of D-aminoacyl-tRNA entities in vivo and helps enforce protein L-homochirality. The protein is D-aminoacyl-tRNA deacylase of Thioalkalivibrio sulfidiphilus (strain HL-EbGR7).